Consider the following 1102-residue polypeptide: Carbamoyl phosphate synthase large chain (1102 aa).

The carboxyphosphate synthetic domain stretch occupies residues 1–408; the sequence is MPKRTDIQSV…AFQKALRSLE (408 aa). ATP-binding residues include Arg129, Arg175, Gly181, Gly182, Glu214, Ile216, Glu221, Gly247, Val248, His249, Gln291, and Glu305. In terms of domain architecture, ATP-grasp 1 spans 137–334; sequence EEVRKKIGHG…IAKIAAKLAV (198 aa). 3 residues coordinate Mg(2+): Gln291, Glu305, and Asn307. Mn(2+) is bound by residues Gln291, Glu305, and Asn307. The tract at residues 409 to 551 is oligomerization domain; the sequence is KKGSQFTFVG…YFYSSYDEES (143 aa). Positions 552–954 are carbamoyl phosphate synthetic domain; the sequence is EVAPREKPAV…AYAKSQAGAY (403 aa). The ATP-grasp 2 domain maps to 682-873; it reads GRVLAEAGLP…LAKAAARISL (192 aa). ATP-binding residues include Arg718, Arg757, Leu759, Glu764, Gly789, Ile790, His791, Ser792, Gln832, and Glu844. Positions 832, 844, and 846 each coordinate Mg(2+). Residues Gln832, Glu844, and Asn846 each coordinate Mn(2+). One can recognise an MGS-like domain in the interval 955–1100; that stretch reads GPLPTKGRAF…QEHAAFLIAA (146 aa). An allosteric domain region spans residues 955 to 1102; that stretch reads GPLPTKGRAF…HAAFLIAARD (148 aa).

It belongs to the CarB family. In terms of assembly, composed of two chains; the small (or glutamine) chain promotes the hydrolysis of glutamine to ammonia, which is used by the large (or ammonia) chain to synthesize carbamoyl phosphate. Tetramer of heterodimers (alpha,beta)4. Requires Mg(2+) as cofactor. Mn(2+) serves as cofactor.

The enzyme catalyses hydrogencarbonate + L-glutamine + 2 ATP + H2O = carbamoyl phosphate + L-glutamate + 2 ADP + phosphate + 2 H(+). It carries out the reaction hydrogencarbonate + NH4(+) + 2 ATP = carbamoyl phosphate + 2 ADP + phosphate + 2 H(+). It functions in the pathway amino-acid biosynthesis; L-arginine biosynthesis; carbamoyl phosphate from bicarbonate: step 1/1. It participates in pyrimidine metabolism; UMP biosynthesis via de novo pathway; (S)-dihydroorotate from bicarbonate: step 1/3. Functionally, large subunit of the glutamine-dependent carbamoyl phosphate synthetase (CPSase). CPSase catalyzes the formation of carbamoyl phosphate from the ammonia moiety of glutamine, carbonate, and phosphate donated by ATP, constituting the first step of 2 biosynthetic pathways, one leading to arginine and/or urea and the other to pyrimidine nucleotides. The large subunit (synthetase) binds the substrates ammonia (free or transferred from glutamine from the small subunit), hydrogencarbonate and ATP and carries out an ATP-coupled ligase reaction, activating hydrogencarbonate by forming carboxy phosphate which reacts with ammonia to form carbamoyl phosphate. In Streptomyces coelicolor (strain ATCC BAA-471 / A3(2) / M145), this protein is Carbamoyl phosphate synthase large chain.